The chain runs to 209 residues: Orotate phosphoribosyltransferase (209 aa).

5-phospho-alpha-D-ribose 1-diphosphate-binding positions include Arg-96, Lys-100, His-102, and 122–130 (EDLISTGGS). Orotate is bound at residue Ser-126.

The protein belongs to the purine/pyrimidine phosphoribosyltransferase family. PyrE subfamily. Homodimer. Mg(2+) serves as cofactor.

The catalysed reaction is orotidine 5'-phosphate + diphosphate = orotate + 5-phospho-alpha-D-ribose 1-diphosphate. It functions in the pathway pyrimidine metabolism; UMP biosynthesis via de novo pathway; UMP from orotate: step 1/2. Its function is as follows. Catalyzes the transfer of a ribosyl phosphate group from 5-phosphoribose 1-diphosphate to orotate, leading to the formation of orotidine monophosphate (OMP). This Listeria monocytogenes serovar 1/2a (strain ATCC BAA-679 / EGD-e) protein is Orotate phosphoribosyltransferase.